The sequence spans 297 residues: Succinate dehydrogenase [ubiquinone] iron-sulfur subunit, mitochondrial (297 aa).

Residues 33–55 are disordered; sequence TAEALSASRPPIKETKTSTVKEP. One can recognise a 2Fe-2S ferredoxin-type domain in the interval 78–157; it reads DKPRMQSYTL…ETRIYPLPHT (80 aa). The [2Fe-2S] cluster site is built by Cys-117, Cys-122, Cys-125, and Cys-137. In terms of domain architecture, 4Fe-4S ferredoxin-type spans 199-229; it reads DRKKLDGLYECILCACCSTSCPSYWWNSEEY. Residues Cys-209, Cys-212, and Cys-215 each coordinate [4Fe-4S] cluster. Residue Cys-219 coordinates [3Fe-4S] cluster. An a ubiquinone-binding site is contributed by Trp-224. [3Fe-4S] cluster contacts are provided by Cys-266 and Cys-272. A [4Fe-4S] cluster-binding site is contributed by Cys-276.

Belongs to the succinate dehydrogenase/fumarate reductase iron-sulfur protein family. Component of complex II composed of four subunits: a flavoprotein (FP), an iron-sulfur protein (IP), and a cytochrome b composed of a large and a small subunit. The cofactor is [2Fe-2S] cluster. Requires [3Fe-4S] cluster as cofactor. [4Fe-4S] cluster is required as a cofactor.

It localises to the mitochondrion inner membrane. It carries out the reaction a quinone + succinate = fumarate + a quinol. It functions in the pathway carbohydrate metabolism; tricarboxylic acid cycle; fumarate from succinate (eukaryal route): step 1/1. Functionally, iron-sulfur protein (IP) subunit of succinate dehydrogenase (SDH) that is involved in complex II of the mitochondrial electron transport chain and is responsible for transferring electrons from succinate to ubiquinone (coenzyme Q). This Zymoseptoria tritici (Speckled leaf blotch fungus) protein is Succinate dehydrogenase [ubiquinone] iron-sulfur subunit, mitochondrial (SDH2).